Consider the following 1171-residue polypeptide: Phytochrome B (1171 aa).

Positions 1–19 (MASGSRATPTRSPSSARPA) are enriched in low complexity. Positions 1-53 (MASGSRATPTRSPSSARPAAPRHQHHHSQSSGGSTSRAGGGGGGGGGGGGGAA) are disordered. The span at 38 to 52 (AGGGGGGGGGGGGGA) shows a compositional bias: gly residues. A GAF domain is found at 259–442 (DVKLLCDTVV…AFGLQLNMEL (184 aa)). Residue Cys364 participates in phytochromobilin binding. 2 consecutive PAS domains span residues 661–732 (VARE…LRGD) and 795–866 (DYKA…MIVL). The Histidine kinase domain maps to 943–1161 (YIYQEIKNPL…FFHIVLELPQ (219 aa)).

It belongs to the phytochrome family. As to quaternary structure, homodimer. In terms of processing, contains one covalently linked phytochromobilin chromophore.

Functionally, regulatory photoreceptor which exists in two forms that are reversibly interconvertible by light: the Pr form that absorbs maximally in the red region of the spectrum and the Pfr form that absorbs maximally in the far-red region. Photoconversion of Pr to Pfr induces an array of morphogenic responses, whereas reconversion of Pfr to Pr cancels the induction of those responses. Pfr controls the expression of a number of nuclear genes including those encoding the small subunit of ribulose-bisphosphate carboxylase, chlorophyll A/B binding protein, protochlorophyllide reductase, rRNA, etc. It also controls the expression of its own gene(s) in a negative feedback fashion. This chain is Phytochrome B (PHYB), found in Oryza sativa subsp. japonica (Rice).